Consider the following 487-residue polypeptide: 26S proteasome non-ATPase regulatory subunit 3 homolog B (487 aa).

Positions 1-21 are disordered; the sequence is MTQDVEMKDNQTPTQSVVSAP. Over residues 10–21 the composition is skewed to polar residues; the sequence is NQTPTQSVVSAP. The PCI domain maps to 239-420; it reads CRYLFYLGKI…GCMVSKETGD (182 aa). Residues 452-487 are disordered; it reads PPNTHREKESEEKRREMKQQEEELAKYMAEEDDDDF. Residues 455 to 480 show a composition bias toward basic and acidic residues; it reads THREKESEEKRREMKQQEEELAKYMA.

The protein belongs to the proteasome subunit S3 family. Component of the 19S regulatory particle (RP/PA700) lid subcomplex of the 26S proteasome. The 26S proteasome is composed of a core protease (CP), known as the 20S proteasome, capped at one or both ends by the 19S regulatory particle (RP/PA700). The RP/PA700 complex is composed of at least 17 different subunits in two subcomplexes, the base and the lid, which form the portions proximal and distal to the 20S proteolytic core, respectively. Interacts with UCH1 and UCH2. As to expression, preferentially expressed in flowers.

Its function is as follows. Acts as a regulatory subunit of the 26 proteasome which is involved in the ATP-dependent degradation of ubiquitinated proteins. In Arabidopsis thaliana (Mouse-ear cress), this protein is 26S proteasome non-ATPase regulatory subunit 3 homolog B.